Reading from the N-terminus, the 69-residue chain is uncharacterized protein (69 aa).

Residues 1-15 (MLLYIVIIVACIISK) lie on the Cytoplasmic side of the membrane. The helical transmembrane segment at 16–36 (LVPNEYWAIHLFFIIMIFMVY) threads the bilayer. Residues 37-69 (MYEKLDIHQKYQFWNYTMSGLSGHNVQITCKCY) lie on the Extracellular side of the membrane. Residue Asn51 is glycosylated (N-linked (GlcNAc...) asparagine; by host).

This sequence belongs to the asfivirus X69R family.

Its subcellular location is the host membrane. This is an uncharacterized protein from Ornithodoros (relapsing fever ticks).